A 276-amino-acid chain; its full sequence is MEENSSKKKLSETMSIQDTVLKFFRVYIPNQTADDMNLPLVSDKISGKPLPRKVTVKSVSSGNIWRMEMKANGNTVFLRDGWKKIVKDENVTEPIFLEFEFDGYGVFHFCVYEYGSMCKRMRSPMEKEVIKVDSEEDVLVGNEESTKGLEESPRRGGTSRRRAKLKTKSHKIYEHLDNKLNPSFPVDMTQNRTRIPSLLIKDYNLTFPNMVIMRDKIGILKRRIVIWKNRSVYLNGIGSIIRRNHVKPGNEVVFELKMVNGYHGLVHEIKVHIIKA.

A DNA-binding region (TF-B3) is located at residues 11-115 (SETMSIQDTV…VFHFCVYEYG (105 aa)). The tract at residues 141–164 (GNEESTKGLEESPRRGGTSRRRAK) is disordered. Residues 144–154 (ESTKGLEESPR) show a composition bias toward basic and acidic residues.

Its subcellular location is the nucleus. This chain is B3 domain-containing protein REM22 (REM22), found in Arabidopsis thaliana (Mouse-ear cress).